The following is a 71-amino-acid chain: Protein DP71L (71 aa).

Important for host CHOP inhibition stretches follow at residues 16-18 (VRF) and 57-61 (LSAVL).

This sequence belongs to the asfivirus DP71L family. As to quaternary structure, interacts (via C-terminus) with host PPP1CB.

In terms of biological role, interacts with the host phosphatase PP1 catalytic subunit (PPP1CB) and recruits it to dephosphorylate EIF2S1/eIF2alpha and therefore restores the host translation that has been shut-down by the host. Also inhibits the EIF2S1/eIF2alpha-ATF4-DDIT3/CHOP pathway. The sequence is that of Protein DP71L from Ornithodoros (relapsing fever ticks).